An 80-amino-acid chain; its full sequence is Small ribosomal subunit protein bS18A (80 aa).

This sequence belongs to the bacterial ribosomal protein bS18 family. In terms of assembly, part of the 30S ribosomal subunit. Forms a tight heterodimer with protein bS6.

Functionally, binds as a heterodimer with protein bS6 to the central domain of the 16S rRNA, where it helps stabilize the platform of the 30S subunit. The polypeptide is Small ribosomal subunit protein bS18A (Rhodococcus jostii (strain RHA1)).